A 102-amino-acid polypeptide reads, in one-letter code: Large ribosomal subunit protein mL63 (102 aa).

The protein belongs to the mitochondrion-specific ribosomal protein mL63 family.

It localises to the mitochondrion. This is Large ribosomal subunit protein mL63 (MRPL57) from Bos taurus (Bovine).